The sequence spans 423 residues: G protein-activated inward rectifier potassium channel 2 (423 aa).

Residues 1-89 (MAKLTESMTN…IFTTLVDLKW (89 aa)) lie on the Cytoplasmic side of the membrane. Phosphoserine is present on residues Ser-16 and Ser-23. Residues 90-114 (RFNLLIFVMVYTVTWLFFGMIWWLI) traverse the membrane as a helical segment. The Extracellular segment spans residues 115-138 (AYIRGDMDHIEDPSWTPCVTNLNG). The segment at residues 139-150 (FVSAFLFSIETE) is an intramembrane region (helical; Pore-forming). The segment at residues 151-157 (TTIGYGY) is an intramembrane region (pore-forming). Residues 152-157 (TIGYGY) carry the Selectivity filter motif. Over 158-166 (RVITDKCPE) the chain is Extracellular. A helical transmembrane segment spans residues 167–188 (GIILLLIQSVLGSIVNAFMVGC). The Cytoplasmic segment spans residues 189 to 423 (MFVKISQPKK…VANLENESKV (235 aa)). Positions 390 to 423 (NQHAELETEEEEKNLEEQTERNGDVANLENESKV) are disordered. Residues 420-423 (ESKV) carry the PDZ-binding motif.

It belongs to the inward rectifier-type potassium channel (TC 1.A.2.1) family. KCNJ6 subfamily. Associates with KCNJ3/GIRK1 or KCNJ5/GRIK4 to form a G-protein-activated heteromultimer pore-forming unit. The resulting inward current is much larger. Interacts (via PDZ-binding motif) with SNX27 (via PDZ domain); the interaction is required when endocytosed to prevent degradation in lysosomes and promote recycling to the plasma membrane. In terms of tissue distribution, most abundant in cerebellum, and to a lesser degree in islets and exocrine pancreas.

The protein resides in the membrane. It carries out the reaction K(+)(in) = K(+)(out). Activated by phosphatidylinositol 4,5 biphosphate (PtdIns(4,5)P2). In terms of biological role, inward rectifier potassium channels are characterized by a greater tendency to allow potassium to flow into the cell rather than out of it. Their voltage dependence is regulated by the concentration of extracellular potassium; as external potassium is raised, the voltage range of the channel opening shifts to more positive voltages. The inward rectification is mainly due to the blockage of outward current by internal magnesium. This potassium channel may be involved in the regulation of insulin secretion by glucose and/or neurotransmitters acting through G-protein-coupled receptors. The sequence is that of G protein-activated inward rectifier potassium channel 2 (KCNJ6) from Homo sapiens (Human).